The chain runs to 226 residues: 2,3-bisphosphoglycerate-dependent phosphoglycerate mutase (226 aa).

Substrate contacts are provided by residues 8–15, 21–22, R58, 109–112, K120, 136–137, and 180–181; these read RHGQSVWN, TG, ERMY, RR, and GN. H9 acts as the Tele-phosphohistidine intermediate in catalysis. The active-site Proton donor/acceptor is the E109.

Belongs to the phosphoglycerate mutase family. BPG-dependent PGAM subfamily.

The catalysed reaction is (2R)-2-phosphoglycerate = (2R)-3-phosphoglycerate. Its pathway is carbohydrate degradation; glycolysis; pyruvate from D-glyceraldehyde 3-phosphate: step 3/5. In terms of biological role, catalyzes the interconversion of 2-phosphoglycerate and 3-phosphoglycerate. The sequence is that of 2,3-bisphosphoglycerate-dependent phosphoglycerate mutase from Chlamydia trachomatis serovar L2b (strain UCH-1/proctitis).